The chain runs to 975 residues: GPI inositol-deacylase (975 aa).

The helical transmembrane segment at 27–47 threads the bilayer; sequence STLVIIVGLLLLCIITSTHIS. An N-linked (GlcNAc...) asparagine glycan is attached at N49. Residue S210 is part of the active site. 5 N-linked (GlcNAc...) asparagine glycosylation sites follow: N276, N384, N407, N419, and N488. Residues 655–675 traverse the membrane as a helical segment; that stretch reads LAFASIPISIIALVLCYQFYY. A glycan (N-linked (GlcNAc...) asparagine) is linked at N696. The next 3 membrane-spanning stretches (helical) occupy residues 699-719, 751-771, and 818-838; these read LLIFLFLSVGPIAINHKAILT, FVWWIGPVFFIISVALLFIIL, and VCFISLGVMVYVPYQFAFILV. N867 carries N-linked (GlcNAc...) asparagine glycosylation. A run of 3 helical transmembrane segments spans residues 868 to 888, 932 to 952, and 955 to 975; these read VSFLMLTIFMIPINAPIVVVF, NWLIVVSILGYLSFYSFMYGI, and LYWVYHISNILNGVLFFLTIL.

It belongs to the GPI inositol-deacylase family.

It is found in the endoplasmic reticulum membrane. In terms of biological role, involved in inositol deacylation of GPI-anchored proteins which plays important roles in the quality control and ER-associated degradation of GPI-anchored proteins. This chain is GPI inositol-deacylase (BST1), found in Kluyveromyces lactis (strain ATCC 8585 / CBS 2359 / DSM 70799 / NBRC 1267 / NRRL Y-1140 / WM37) (Yeast).